The chain runs to 449 residues: Streptomycin-6-phosphate phosphatase (449 aa).

Positions 1–32 are cleaved as a signal peptide; that stretch reads MRFAYGRLPWRRGAVLGSALLVLVTAPAASTA. Residue aspartate 50 participates in Mg(2+) binding. Residue aspartate 50 participates in Zn(2+) binding. Serine 99 serves as the catalytic Phosphoserine intermediate. Mg(2+)-binding residues include aspartate 151 and threonine 153. Positions 268-290 are disordered; the sequence is APGGTAPQRCATRNPGRPAGTPD. Residue glutamate 321 participates in Mg(2+) binding. Residues aspartate 326, histidine 330, aspartate 368, histidine 369, and histidine 412 each coordinate Zn(2+).

It belongs to the alkaline phosphatase family. It depends on Mg(2+) as a cofactor. Zn(2+) is required as a cofactor.

Its subcellular location is the secreted. It carries out the reaction streptomycin 6-phosphate + H2O = streptomycin + phosphate. Its pathway is antibiotic biosynthesis; streptomycin biosynthesis. Functionally, specifically cleaves both streptomycin-6-phosphate and, more slowly, streptomycin-3''-phosphate during the biosynthesis of streptomycin. The sequence is that of Streptomycin-6-phosphate phosphatase (strK) from Streptomyces griseus.